The sequence spans 357 residues: O-methyltransferase 1, chloroplastic (357 aa).

The transit peptide at 1 to 53 directs the protein to the chloroplast; the sequence is MPVLPWLAAAATTPVRRSPPLPATPRALLRLPASSFPPWSNCAKSGLPPRGPF. The interval 50–71 is disordered; it reads RGPFATAADTPLGGSLPEPEEE.

It belongs to the methyltransferase superfamily. LCMT family. As to expression, expressed in roots, leaf sheaths, flag leaves and panicles.

It is found in the plastid. It localises to the chloroplast. The enzyme catalyses N-acetylserotonin + S-adenosyl-L-methionine = melatonin + S-adenosyl-L-homocysteine + H(+). It functions in the pathway aromatic compound metabolism; melatonin biosynthesis; melatonin from serotonin: step 1/2. Its function is as follows. Involved in melatonin biosynthesis. Can function as acetylserotonin O-methyltransferase. Catalyzes the transfer of a methyl group onto N-acetylserotonin, producing melatonin (N-acetyl-5-methoxytryptamine). Involved in the regulation of jasmonate- and brassinosteroid-mediated plant growth and defense responses. The polypeptide is O-methyltransferase 1, chloroplastic (Oryza sativa subsp. japonica (Rice)).